The primary structure comprises 253 residues: Chloride intracellular channel protein 4 (253 aa).

At Ala2 the chain carries N-acetylalanine. Positions 2–101 (ALSMPLNGLK…EEFLEEVLCP (100 aa)) are required for insertion into the membrane. Phosphoserine is present on Ser4. Position 24 is an N6-acetyllysine (Lys24). Positions 35–38 (CPFS) match the G-site motif. The helical transmembrane segment at 37–57 (FSQRLFMILWLKGVVFSVTTV) threads the bilayer. The region spanning 81–244 (NSEVKTDVNK…PSDKEVEIAY (164 aa)) is the GST C-terminal domain. Lys130 carries the post-translational modification N6-acetyllysine. 3 positions are modified to phosphoserine: Ser132, Ser167, and Ser236. Position 244 is a phosphotyrosine (Tyr244).

Belongs to the chloride channel CLIC family. In terms of assembly, component of a multimeric complex consisting of several cytoskeletal proteins, including actin, ezrin, alpha-actinin, gelsolin, IQGAP1 and CLIC5A. Binds directly to brain dynamin I in a complex containing actin, tubulin and 14-3-3 isoforms. Monomer. Interacts with HRH3. Interacts with AKAP9. As to expression, detected in epithelial cells from colon, esophagus and kidney (at protein level). Expression is prominent in heart, kidney, placenta and skeletal muscle.

Its subcellular location is the cytoplasm. It is found in the cytoskeleton. The protein localises to the microtubule organizing center. It localises to the centrosome. The protein resides in the cytoplasmic vesicle membrane. Its subcellular location is the nucleus. It is found in the cell membrane. The protein localises to the mitochondrion. It localises to the cell junction. The protein resides in the endoplasmic reticulum membrane. It carries out the reaction chloride(in) = chloride(out). The catalysed reaction is thiocyanate(in) = thiocyanate(out). It catalyses the reaction nitrate(in) = nitrate(out). The enzyme catalyses iodide(out) = iodide(in). It carries out the reaction bromide(in) = bromide(out). The catalysed reaction is fluoride(in) = fluoride(out). It catalyses the reaction choline(out) = choline(in). With respect to regulation, inhibited by rapamycin, amphotericin B and IAA-94. Its function is as follows. In the soluble state, catalyzes glutaredoxin-like thiol disulfide exchange reactions with reduced glutathione as electron donor. Can insert into membranes and form voltage-dependent multi-ion conductive channels. Membrane insertion seems to be redox-regulated and may occur only under oxidizing conditions. Has alternate cellular functions like a potential role in angiogenesis or in maintaining apical-basolateral membrane polarity during mitosis and cytokinesis. Could also promote endothelial cell proliferation and regulate endothelial morphogenesis (tubulogenesis). Promotes cell-surface expression of HRH3. The sequence is that of Chloride intracellular channel protein 4 from Homo sapiens (Human).